A 293-amino-acid polypeptide reads, in one-letter code: Foldase protein PrsA 2 (293 aa).

Residues 1–20 (MKKKLILGLVMMMALFSLAA) form the signal peptide. The N-palmitoyl cysteine moiety is linked to residue Cys-21. The S-diacylglycerol cysteine moiety is linked to residue Cys-21. The PpiC domain maps to 135-226 (QPDITVSHIL…YGYHIIQMDK (92 aa)).

It belongs to the PrsA family.

The protein localises to the cell membrane. It catalyses the reaction [protein]-peptidylproline (omega=180) = [protein]-peptidylproline (omega=0). Plays a major role in protein secretion by helping the post-translocational extracellular folding of several secreted proteins. In Listeria monocytogenes serovar 1/2a (strain ATCC BAA-679 / EGD-e), this protein is Foldase protein PrsA 2 (prsA2).